Consider the following 257-residue polypeptide: Global transcriptional regulator CodY (257 aa).

The tract at residues 1 to 155 (MSLLSKTREL…AATVIGMEIL (155 aa)) is GAF domain. GTP is bound by residues valine 22, phenylalanine 24, serine 43, arginine 44, arginine 45, and lysine 47. Positions 61, 96, and 98 each coordinate L-isoleucine. 2 residues coordinate GTP: glutamate 153 and lysine 158. Positions 203–222 (ASKVADRVGITRSVIVNALR) form a DNA-binding region, H-T-H motif.

It belongs to the CodY family. Homodimer. Homotetramer. May form homodimers under conditions in which energy sources are sufficient (active state) and homotetramers under insufficient nutrient conditions (inactive state).

It localises to the cytoplasm. Activity of CodY is modulated by interaction with two types of effectors: the branched-chain amino acids (BCAAs) leucine, isoleucine and valine, which are signals of the nutritional status of the cell, and GTP, which may signal the energetic status of the cell. Functionally, DNA-binding global transcriptional regulator which is involved in the adaptive response to starvation and acts by directly or indirectly controlling the expression of numerous genes in response to nutrient availability. During rapid exponential growth, CodY is highly active and represses genes whose products allow adaptation to nutrient depletion. In Staphylococcus aureus (strain Mu3 / ATCC 700698), this protein is Global transcriptional regulator CodY.